A 186-amino-acid chain; its full sequence is uncharacterized protein (186 aa).

The protein to M.jannaschii MJ0208.

This is an uncharacterized protein from Methanocaldococcus jannaschii (strain ATCC 43067 / DSM 2661 / JAL-1 / JCM 10045 / NBRC 100440) (Methanococcus jannaschii).